The primary structure comprises 292 residues: Small ribosomal subunit protein uS9m (292 aa).

The tract at residues 273–292 is disordered; sequence VERKKPGKRKARKMPTWVKR.

Belongs to the universal ribosomal protein uS9 family.

It localises to the mitochondrion. The chain is Small ribosomal subunit protein uS9m (MRPS9) from Kluyveromyces marxianus (Yeast).